The chain runs to 101 residues: Putative defensin-like protein 307 (101 aa).

The N-terminal stretch at 1–22 (MEKSALIFIGILLFSTCTSIMA) is a signal peptide. 3 disulfides stabilise this stretch: C29–C49, C35–C54, and C40–C56.

It belongs to the DEFL family.

The protein resides in the secreted. The chain is Putative defensin-like protein 307 from Arabidopsis thaliana (Mouse-ear cress).